The sequence spans 671 residues: MADKKRYEELINILDQYSYDYYVIDNPTVEDAEYDQKMQELLKIEEAHPEWVTPESPSKRVGGEVLEGFKKVAHDTPMLSLANAFNQEDLADFDRRIRDKVGDDIAYMCELKIDGLAVSLQYENGKYKQGATRGDGTIGEDITANLRTIRSIPMKLQKDYSIEVRGEAFMPKRSFQKLNEIREEEGQMLFANPRNAAAGSLRQLDTKIAASRNLDIFLYAVADFGEMGVETHSAGLDMLETLGLKVNKERRLCNSLEEVYAYIEEWTEKRAGLAYDIDGIVLKLNNLEQQRQMGTTVKSPRWSIAYKFPAEEVPTKLLDIELNVGRTGVITPTAVLEPVRVAGTTVSRASLHNEDLITEKDIRIGDTVLIKKAGDIIPEVIKSITEERSGSEEPFHMPKNCPTCDSELVRLEEEVALRCINPKCPAQIKEGLIHFVSRNAMNIDGLGEKVIIQLFSQHLIKDVADLFFLSKEKLLELERMGEKSVTNLLASIEASKQNSLEKLLFGLGIRHVGAKAAKSLAIHFDTMDNLKVADKETLTSINDIGEKMADSIVTYFANEEVHDLLEELKRAGVNMTYTGPKLEDMSEEELVFAGKTVVLTGKLEKLTRNDAKALIESLGGNVSGSVSKKTDVVVAGSDAGSKLAKAEELAIPIWSEEDLIEYLPDEGGLNE.

Residues 31-35 (DAEYD), 80-81 (SL), and Glu110 contribute to the NAD(+) site. Lys112 (N6-AMP-lysine intermediate) is an active-site residue. Residues Arg133, Glu167, Lys283, and Lys307 each coordinate NAD(+). Zn(2+)-binding residues include Cys401, Cys404, Cys419, and Cys424. Residues 587–671 (EEELVFAGKT…YLPDEGGLNE (85 aa)) form the BRCT domain.

The protein belongs to the NAD-dependent DNA ligase family. LigA subfamily. It depends on Mg(2+) as a cofactor. Requires Mn(2+) as cofactor.

The enzyme catalyses NAD(+) + (deoxyribonucleotide)n-3'-hydroxyl + 5'-phospho-(deoxyribonucleotide)m = (deoxyribonucleotide)n+m + AMP + beta-nicotinamide D-nucleotide.. Functionally, DNA ligase that catalyzes the formation of phosphodiester linkages between 5'-phosphoryl and 3'-hydroxyl groups in double-stranded DNA using NAD as a coenzyme and as the energy source for the reaction. It is essential for DNA replication and repair of damaged DNA. This Listeria monocytogenes serotype 4a (strain HCC23) protein is DNA ligase.